The chain runs to 83 residues: MVTIRLARGGAKKRPFYNIVVADSRNARDGRFIERVGFFNPLARGQEETLRLDLDRVEHWVATGAATSDRVAKLIKDARKATA.

Belongs to the bacterial ribosomal protein bS16 family.

The sequence is that of Small ribosomal subunit protein bS16 from Shewanella denitrificans (strain OS217 / ATCC BAA-1090 / DSM 15013).